Consider the following 81-residue polypeptide: Adipogenin (81 aa).

The chain crosses the membrane as a helical span at residues 16–36; it reads FLVFWLCLPVALLLFLLIIWL.

Belongs to the adipogenin family. In terms of tissue distribution, highly expressed in subcutaneous, perirenal and mesecentric adipose tissue.

Its subcellular location is the membrane. The protein resides in the nucleus. Its function is as follows. Plays a role in stimulating adipocyte differentiation and development. This Bos taurus (Bovine) protein is Adipogenin.